Here is a 320-residue protein sequence, read N- to C-terminus: Putative thiosulfate sulfurtransferase (320 aa).

The signal sequence occupies residues 1-37 (MSVRSLRWPRQKAFLAVISLVVAVLLAVPGWLTPATA). 2 Rhodanese domains span residues 56-166 (NNKQ…PVTK) and 194-315 (LTGK…PVET). Cys274 functions as the Cysteine persulfide intermediate in the catalytic mechanism.

It is found in the periplasm. The enzyme catalyses thiosulfate + hydrogen cyanide = thiocyanate + sulfite + 2 H(+). Functionally, may be a sulfotransferase involved in the transport of sulfate. Displays very low rhodanese activity. In Synechococcus elongatus (strain ATCC 33912 / PCC 7942 / FACHB-805) (Anacystis nidulans R2), this protein is Putative thiosulfate sulfurtransferase (rhdA).